Here is a 72-residue protein sequence, read N- to C-terminus: Large ribosomal subunit protein bL31 (72 aa).

It belongs to the bacterial ribosomal protein bL31 family. Type A subfamily. Part of the 50S ribosomal subunit.

In terms of biological role, binds the 23S rRNA. The chain is Large ribosomal subunit protein bL31 from Deinococcus deserti (strain DSM 17065 / CIP 109153 / LMG 22923 / VCD115).